The sequence spans 776 residues: MASLIYRQLLTNSYTVDLSDEIQEIGSTKSQNVTINPGPFAQTGYAPVNWGPGEINDSTTVEPLLDGPYQPMTFNPPVDYWMLLAPTTPGVIVEGTNNTDRWLATILIEPNVQSENRTYTIFGIQEQLTVSNTSQDQWKFIDVVKTTANGSIGQYGSLLSSPKLYAVMKHNEKLYTYEGQTPNARTGHYSTTNYDSVNMTAFCDFYIIPRSEESKCTEYINNGLPPIQNTRNVVPLSLTARDVIHYRAQANEDIVISKTSFWKEMQYNRDITIRFKFANTIIKSGGLGYKWSEISFKPANYQYTYTRDGEEVTAHTTCSVNGVNDFSFNGGSLPTDFVVSKFEVIKENSYVYIDYWDDSQAFRNVMYVRSLAANLNSVMCTGGSYNFSLPVGQWPVLTGGAVSLHSAGVTLSTQFTDFVSLNSLRFRFRLAVEEPHFKLTRTRLDRLYGLPAADPNNGKEYYEIAGRFSLISLVPSNDDYQTPIANSVTVRQDLERQLGELREEFNALSQEIAMSQLIDLALLPLDMFSMFSGIKSTIDAAKSMATNVMKKFKKSGLANSVSTLTDSLSDAASSISRGSSIRSIGSSASAWTDVSTQITDISSSVSSVSTQTSTISRRLRLKEMATQTEGMNFDDISAAVLKTKIDKSTQISPNTIPDIVTEASEKFIPNRAYRVINNDDVFEAGIDGKFFAYKVDTFEEIPFDVQKFADLVTDSPVISAIIDFKTLKNLNDNYGITKQQAFNLLRSDPRVLREFINQDNPIIRNRIEQLIMQCRL.

Residues 65–224 form a spike head region; that stretch reads LDGPYQPMTF…KCTEYINNGL (160 aa). Cys203 and Cys216 are disulfide-bonded. The spike body and stalk (antigen domain) stretch occupies residues 248–479; that stretch reads AQANEDIVIS…LISLVPSNDD (232 aa). Residues 308 to 310 carry the DGE motif; interaction with ITGA2/ITGB1 heterodimer motif; it reads DGE. A disulfide bond links Cys318 and Cys380. The interval 389 to 409 is hydrophobic; possible role in virus entry into host cell; that stretch reads LPVGQWPVLTGGAVSLHSAGV. The YGL motif; interaction with ITGA4 signature appears at 448-450; sequence YGL. The stretch at 484–511 forms a coiled coil; it reads IANSVTVRQDLERQLGELREEFNALSQE. Residues 510 to 776 form a spike foot region; sequence QEIAMSQLID…IEQLIMQCRL (267 aa). The KID motif; interaction with HSPA8 motif lies at 644-646; sequence KID.

This sequence belongs to the rotavirus VP4 family. Homotrimer. VP4 adopts a dimeric appearance above the capsid surface, while forming a trimeric base anchored inside the capsid layer. Only hints of the third molecule are observed above the capsid surface. It probably performs a series of molecular rearrangements during viral entry. Prior to trypsin cleavage, it is flexible. The priming trypsin cleavage triggers its rearrangement into rigid spikes with approximate two-fold symmetry of their protruding parts. After an unknown second triggering event, cleaved VP4 may undergo another rearrangement, in which two VP5* subunits fold back on themselves and join a third subunit to form a tightly associated trimer, shaped like a folded umbrella. Interacts with VP6. Interacts with VP7. As to quaternary structure, homotrimer. The trimer is coiled-coil stabilized by its C-terminus, however, its N-terminus, known as antigen domain or 'body', seems to be flexible allowing it to self-associate either as a dimer or a trimer. Proteolytic cleavage by trypsin results in activation of VP4 functions and greatly increases infectivity. The penetration into the host cell is dependent on trypsin treatment of VP4. It produces two peptides, VP5* and VP8* that remain associated with the virion. Cleavage of VP4 by trypsin probably occurs in vivo in the lumen of the intestine prior to infection of enterocytes. Trypsin seems to be incorporated into the three-layered viral particles but remains inactive as long as the viral outer capsid is intact and would only be activated upon the solubilization of the latter.

The protein localises to the virion. The protein resides in the host rough endoplasmic reticulum. It is found in the host cell membrane. It localises to the host cytoplasm. Its subcellular location is the host cytoskeleton. The protein localises to the host endoplasmic reticulum-Golgi intermediate compartment. Functionally, spike-forming protein that mediates virion attachment to the host epithelial cell receptors and plays a major role in cell penetration, determination of host range restriction and virulence. Rotavirus attachment and entry into the host cell probably involves multiple sequential contacts between the outer capsid proteins VP4 and VP7, and the cell receptors. It is subsequently lost, together with VP7, following virus entry into the host cell. Following entry into the host cell, low intracellular or intravesicular Ca(2+) concentration probably causes the calcium-stabilized VP7 trimers to dissociate from the virion. This step is probably necessary for the membrane-disrupting entry step and the release of VP4, which is locked onto the virion by VP7. During the virus exit from the host cell, VP4 seems to be required to target the newly formed virions to the host cell lipid rafts. In terms of biological role, forms the spike 'foot' and 'body' and acts as a membrane permeabilization protein that mediates release of viral particles from endosomal compartments into the cytoplasm. During entry, the part of VP5* that protrudes from the virus folds back on itself and reorganizes from a local dimer to a trimer. This reorganization may be linked to membrane penetration by exposing VP5* hydrophobic region. In integrin-dependent strains, VP5* targets the integrin heterodimer ITGA2/ITGB1 for cell attachment. Forms the head of the spikes and mediates the recognition of specific host cell surface glycans. It is the viral hemagglutinin and an important target of neutralizing antibodies. In sialic acid-dependent strains, VP8* binds to host cell sialic acid, most probably a ganglioside, providing the initial contact. In some other strains, VP8* mediates the attachment to histo-blood group antigens (HBGAs) for viral entry. In Macaca mulatta (Rhesus macaque), this protein is Outer capsid protein VP4.